The sequence spans 80 residues: Beta-toxin KAaH1 (80 aa).

The signal sequence occupies residues 1 to 22; the sequence is MMKLMLFSIIVILFSLIGSIHG. The 56-residue stretch at 25 to 80 folds into the LCN-type CS-alpha/beta domain; the sequence is VPGNYPLDSSDDTYLCAPLGENPFCIKICRKHGVKYGYCYAFQCWCEYLEDKNVKI. Disulfide bonds link Cys-40/Cys-63, Cys-49/Cys-68, and Cys-53/Cys-70.

The protein belongs to the long (3 C-C) scorpion toxin superfamily. Sodium/Potassium channel inhibitor family. As to expression, expressed by the venom gland.

It localises to the secreted. Inhibits the vertebrate potassium channels Kv1.1/KCNA1 and Kv1.3/KCNA3 in vitro with an IC(50) of 5.3 nM and 50.0 nM respectively. This is Beta-toxin KAaH1 from Androctonus australis (Sahara scorpion).